The sequence spans 793 residues: DnaJ homolog subfamily C member 10 (793 aa).

Positions 1-32 are cleaved as a signal peptide; that stretch reads MGVWLNKDDYIRDLKRIILCFLIVYMAILVGT. One can recognise a J domain in the interval 35–100; sequence DFYSLLGVSK…DLRKKYDKYG (66 aa). Positions 130-232 constitute a Thioredoxin 1 domain; sequence EIITLERREF…ESLVSFAMQH (103 aa). A disulfide bridge connects residues Cys-158 and Cys-161. Trxb regions lie at residues 235–350 and 348–463; these read STVT…LPDF and PDFE…PQNF. Thioredoxin domains lie at 454-553, 557-662, and 671-778; these read HVTT…IEDL, SVVS…SLRI, and VSTD…ISEK. A disulfide bridge links Cys-480 with Cys-483. The N-linked (GlcNAc...) asparagine glycan is linked to Asn-530. 2 disulfide bridges follow: Cys-588–Cys-591 and Cys-700–Cys-703. Residues 790-793 carry the Prevents secretion from ER motif; that stretch reads KDEL.

In terms of assembly, interacts with EDEM1. Interacts with HSPA5 (via its J domain).

It is found in the endoplasmic reticulum lumen. Its function is as follows. Endoplasmic reticulum disulfide reductase involved both in the correct folding of proteins and degradation of misfolded proteins. Required for efficient folding of proteins in the endoplasmic reticulum by catalyzing the removal of non-native disulfide bonds formed during the folding of proteins, such as LDLR. Also involved in endoplasmic reticulum-associated degradation (ERAD) by reducing incorrect disulfide bonds in misfolded glycoproteins recognized by EDEM1. Interaction with HSPA5 is required its activity, not for the disulfide reductase activity, but to facilitate the release of DNAJC10 from its substrate. Promotes apoptotic signaling pathway in response to endoplasmic reticulum stress. This is DnaJ homolog subfamily C member 10 (DNAJC10) from Homo sapiens (Human).